Consider the following 261-residue polypeptide: tRNA threonylcarbamoyladenosine dehydratase (261 aa).

Residues 230–250 (CANGFGAATMITATFGFFAVS) traverse the membrane as a helical segment.

This sequence belongs to the HesA/MoeB/ThiF family.

Its subcellular location is the membrane. In terms of biological role, catalyzes the ATP-dependent dehydration of threonylcarbamoyladenosine at position 37 (t(6)A37) to form cyclic t(6)A37 (ct(6)A37) in tRNAs that read codons beginning with adenine. The sequence is that of tRNA threonylcarbamoyladenosine dehydratase (tcdA) from Haemophilus influenzae (strain ATCC 51907 / DSM 11121 / KW20 / Rd).